Here is an 87-residue protein sequence, read N- to C-terminus: MAGTSLGTRFYRQIKRHPGLIPMIGFICLGMGSAGLYLLRLALRSPDVCWDRKNNPEPWNRLSPNDQYKFLAVSTDYKKLKKDRPDF.

The protein belongs to the complex I NDUFA4 subunit family.

The chain is NADH dehydrogenase [ubiquinone] 1 alpha subcomplex subunit 4-like 2 (Ndufa4l2) from Mus musculus (Mouse).